The primary structure comprises 462 residues: 3-deoxy-D-manno-octulosonic acid transferase (462 aa).

The chain crosses the membrane as a helical; Signal-anchor span at residues methionine 2–isoleucine 22. An RPE1 insert domain is found at serine 47–tyrosine 90. Glutamate 104 functions as the Proton acceptor in the catalytic mechanism. CMP-binding positions include proline 308 to arginine 309, phenylalanine 349 to glutamate 351, and asparagine 374 to glutamate 377.

It belongs to the glycosyltransferase group 1 family.

It localises to the cell inner membrane. It catalyses the reaction lipid IVA (E. coli) + CMP-3-deoxy-beta-D-manno-octulosonate = alpha-Kdo-(2-&gt;6)-lipid IVA (E. coli) + CMP + H(+). The protein operates within bacterial outer membrane biogenesis; LPS core biosynthesis. In terms of biological role, involved in lipopolysaccharide (LPS) biosynthesis. Catalyzes the transfer of 3-deoxy-D-manno-octulosonate (Kdo) residue(s) from CMP-Kdo to lipid IV(A), the tetraacyldisaccharide-1,4'-bisphosphate precursor of lipid A. This Rickettsia typhi (strain ATCC VR-144 / Wilmington) protein is 3-deoxy-D-manno-octulosonic acid transferase (waaA).